Reading from the N-terminus, the 254-residue chain is GPI alpha-1,4-mannosyltransferase I, stabilizing subunit (254 aa).

Residues 1–22 (MAAGAVAWLLLWAAWLVGRLAA) form the signal peptide. Residues 23–226 (DFSDAPFSAG…PVGLTIHTSL (204 aa)) lie on the Lumenal side of the membrane. Asparagine 211 carries N-linked (GlcNAc...) asparagine glycosylation. Residues 227–247 (VCSVTLLITILCSTLILLAVF) form a helical membrane-spanning segment. The Cytoplasmic segment spans residues 248-254 (KYGHFSL).

The protein belongs to the PIGX family. Part of the glycosylphosphatidylinositol-mannosyltransferase I complex that is composed of PIGM and PIGX. Interacts with PIGM; PIGX stabilizes PIGM.

Its subcellular location is the endoplasmic reticulum membrane. The protein operates within glycolipid biosynthesis; glycosylphosphatidylinositol-anchor biosynthesis. In terms of biological role, stabilizing subunit of the glycosylphosphatidylinositol-mannosyltransferase I complex which catalyzes the transfer of the first mannose, via an alpha-1,4 bond from a dolichol-phosphate-mannose (Dol-P-Man) to the glucosaminyl acyl phosphatidylinositol (GlcN-(acyl)PI) intermediate to generate alpha-D-Man-(1-&gt;4)-alpha-D-GlcN-(1-&gt;6)-(1-radyl,2-acyl-sn-glycero-3-phospho)-2-acyl-inositol and participates in the sixth step of the glycosylphosphatidylinositol-anchor biosynthesis. Probably acts by stabilizing the mannosyltransferase PIGM. The polypeptide is GPI alpha-1,4-mannosyltransferase I, stabilizing subunit (Mus musculus (Mouse)).